Reading from the N-terminus, the 968-residue chain is Putative pectinesterase/pectinesterase inhibitor 26 (968 aa).

A helical transmembrane segment spans residues 33-53 (IGISVAVLVAIIISSTVTIAI). Positions 71–230 (LTPAASLKTV…TEFTSNSLAI (160 aa)) are pectinesterase inhibitor 26 A. Asn101, Asn158, Asn219, Asn295, Asn352, Asn400, Asn464, Asn541, Asn559, and Asn603 each carry an N-linked (GlcNAc...) asparagine glycan. The interval 265 to 430 (LTPAASLRNV…RKFTSNSLAI (166 aa)) is pectinesterase inhibitor 26 B. The tract at residues 453–614 (PTPSSVLRTV…TEFTSNSLAI (162 aa)) is pectinesterase inhibitor 26 C. The segment at 660-954 (HVTVAADGSG…FTVKYFLRGD (295 aa)) is pectinesterase 26. Thr735 is a binding site for substrate. A glycan (N-linked (GlcNAc...) asparagine) is linked at Asn737. Substrate is bound at residue Gln765. Residue Asp788 is the Proton donor; for pectinesterase activity of the active site. Cys802 and Cys822 are oxidised to a cystine. Catalysis depends on Asp809, which acts as the Nucleophile; for pectinesterase activity. An N-linked (GlcNAc...) asparagine glycan is attached at Asn863. Residues Arg872 and Trp874 each coordinate substrate. A glycan (N-linked (GlcNAc...) asparagine) is linked at Asn900.

It in the N-terminal section; belongs to the PMEI family. The protein in the C-terminal section; belongs to the pectinesterase family. In terms of tissue distribution, expressed in flowers.

The protein resides in the membrane. The catalysed reaction is [(1-&gt;4)-alpha-D-galacturonosyl methyl ester](n) + n H2O = [(1-&gt;4)-alpha-D-galacturonosyl](n) + n methanol + n H(+). The protein operates within glycan metabolism; pectin degradation; 2-dehydro-3-deoxy-D-gluconate from pectin: step 1/5. In terms of biological role, acts in the modification of cell walls via demethylesterification of cell wall pectin. In Arabidopsis thaliana (Mouse-ear cress), this protein is Putative pectinesterase/pectinesterase inhibitor 26 (PME26).